A 236-amino-acid polypeptide reads, in one-letter code: Eukaryotic translation initiation factor 3 subunit J (236 aa).

Positions 1–84 are disordered; it reads MADDWESAAD…RLEEEAEAQR (84 aa). Residues 28–46 show a composition bias toward acidic residues; it reads GEDEDEDIKDSWEDEEEKK. Composition is skewed to basic and acidic residues over residues 47–58 and 68–77; these read DEEKPTKTEAPA and AKLEQQARLE.

Belongs to the eIF-3 subunit J family. As to quaternary structure, component of the eukaryotic translation initiation factor 3 (eIF-3) complex. The eIF-3 complex interacts with pix.

The protein resides in the cytoplasm. Functionally, component of the eukaryotic translation initiation factor 3 (eIF-3) complex, which is involved in protein synthesis of a specialized repertoire of mRNAs and, together with other initiation factors, stimulates binding of mRNA and methionyl-tRNAi to the 40S ribosome. The eIF-3 complex specifically targets and initiates translation of a subset of mRNAs involved in cell proliferation. This Drosophila yakuba (Fruit fly) protein is Eukaryotic translation initiation factor 3 subunit J.